A 130-amino-acid polypeptide reads, in one-letter code: Small ribosomal subunit protein uS9 (130 aa).

The protein belongs to the universal ribosomal protein uS9 family.

The sequence is that of Small ribosomal subunit protein uS9 from Edwardsiella ictaluri (strain 93-146).